Reading from the N-terminus, the 386-residue chain is Alanine racemase 1 (386 aa).

The Proton acceptor; specific for D-alanine role is filled by Lys38. An N6-(pyridoxal phosphate)lysine modification is found at Lys38. Arg136 serves as a coordination point for substrate. The Proton acceptor; specific for L-alanine role is filled by Tyr267. Met315 is a substrate binding site.

This sequence belongs to the alanine racemase family. It depends on pyridoxal 5'-phosphate as a cofactor.

The catalysed reaction is L-alanine = D-alanine. It participates in amino-acid biosynthesis; D-alanine biosynthesis; D-alanine from L-alanine: step 1/1. In terms of biological role, catalyzes the interconversion of L-alanine and D-alanine. May also act on other amino acids. In Clostridium acetobutylicum (strain ATCC 824 / DSM 792 / JCM 1419 / IAM 19013 / LMG 5710 / NBRC 13948 / NRRL B-527 / VKM B-1787 / 2291 / W), this protein is Alanine racemase 1 (alr1).